The chain runs to 719 residues: Photosystem I P700 chlorophyll a apoprotein A1 (719 aa).

8 helical membrane-spanning segments follow: residues 59-82 (VFSAHFGQLAIIFIWLSGMYFHGA), 145-168 (LYCTAIGALIFAALMLFAGWFHYH), 184-208 (LNHHLAGLLGIGSLSWAGHQVHVSL), 280-298 (TAHHHLAIAILFLIAGHMY), 335-358 (WHAQLALNLAMLGSLTIVVAHHMY), 374-400 (LSLFTHHMWIGGFLIVGAAAHAAIFMV), 422-444 (AIVSHLNWACIFLGFHSFGLYIH), and 520-538 (FLVHHIHAFTIHVTVLILL). Residues Cys562 and Cys571 each coordinate [4Fe-4S] cluster. Helical transmembrane passes span 578 to 599 (HVFLGLFWMYNAISVVIFHFSW) and 653 to 675 (LSAYGLLFLGAHFVWAFSLMFLF). Residue His664 participates in chlorophyll a' binding. Met672 and Tyr680 together coordinate chlorophyll a. Trp681 is a phylloquinone binding site. The chain crosses the membrane as a helical span at residues 713 to 719 (AVGVAHY).

Belongs to the PsaA/PsaB family. In terms of assembly, the PsaA/B heterodimer binds the P700 chlorophyll special pair and subsequent electron acceptors. PSI consists of a core antenna complex that captures photons, and an electron transfer chain that converts photonic excitation into a charge separation. The eukaryotic PSI reaction center is composed of at least 11 subunits. P700 is a chlorophyll a/chlorophyll a' dimer, A0 is one or more chlorophyll a, A1 is one or both phylloquinones and FX is a shared 4Fe-4S iron-sulfur center. is required as a cofactor.

Its subcellular location is the plastid. The protein localises to the chloroplast thylakoid membrane. The catalysed reaction is reduced [plastocyanin] + hnu + oxidized [2Fe-2S]-[ferredoxin] = oxidized [plastocyanin] + reduced [2Fe-2S]-[ferredoxin]. PsaA and PsaB bind P700, the primary electron donor of photosystem I (PSI), as well as the electron acceptors A0, A1 and FX. PSI is a plastocyanin-ferredoxin oxidoreductase, converting photonic excitation into a charge separation, which transfers an electron from the donor P700 chlorophyll pair to the spectroscopically characterized acceptors A0, A1, FX, FA and FB in turn. Oxidized P700 is reduced on the lumenal side of the thylakoid membrane by plastocyanin. In Encephalartos lebomboensis (Lebombo cycad), this protein is Photosystem I P700 chlorophyll a apoprotein A1.